The chain runs to 63 residues: UPF0512 protein X (63 aa).

The protein belongs to the UPF0512 family.

In Dictyostelium discoideum (Social amoeba), this protein is UPF0512 protein X.